The chain runs to 283 residues: Glutamate racemase (283 aa).

Substrate-binding positions include 7–8 (DS) and 39–40 (YG). The active-site Proton donor/acceptor is the Cys-70. 71–72 (NT) is a substrate binding site. Cys-206 (proton donor/acceptor) is an active-site residue. 207–208 (TH) provides a ligand contact to substrate.

Belongs to the aspartate/glutamate racemases family.

The enzyme catalyses L-glutamate = D-glutamate. It functions in the pathway cell wall biogenesis; peptidoglycan biosynthesis. Functionally, provides the (R)-glutamate required for cell wall biosynthesis. The chain is Glutamate racemase from Caulobacter sp. (strain K31).